The following is a 358-amino-acid chain: Uptake hydrogenase small subunit (358 aa).

The tat-type signal signal peptide spans 1–45; the sequence is MSRLETFYDVMRRQGITRRSFLKYCSLTAAALGLGPAFAPRIAHA. [4Fe-4S] cluster contacts are provided by cysteine 62, cysteine 65, cysteine 160, cysteine 194, histidine 232, cysteine 235, cysteine 260, and cysteine 266. [3Fe-4S] cluster is bound by residues cysteine 275, cysteine 294, and cysteine 297.

Belongs to the [NiFe]/[NiFeSe] hydrogenase small subunit family. As to quaternary structure, heterodimer of a large and a small subunit. The cofactor is [4Fe-4S] cluster. [3Fe-4S] cluster serves as cofactor. In terms of processing, predicted to be exported by the Tat system. The position of the signal peptide cleavage has been experimentally proven.

Its subcellular location is the cell membrane. It catalyses the reaction H2 + A = AH2. Its function is as follows. This enzyme recycles the H(2) produced by nitrogenase to increase the production of ATP and to protect nitrogenase against inhibition or damage by O(2) under carbon- or phosphate-limited conditions. The sequence is that of Uptake hydrogenase small subunit (hoxK) from Azotobacter vinelandii.